Reading from the N-terminus, the 115-residue chain is Large ribosomal subunit protein uL18 (115 aa).

This sequence belongs to the universal ribosomal protein uL18 family. As to quaternary structure, part of the 50S ribosomal subunit; part of the 5S rRNA/L5/L18/L25 subcomplex. Contacts the 5S and 23S rRNAs.

This is one of the proteins that bind and probably mediate the attachment of the 5S RNA into the large ribosomal subunit, where it forms part of the central protuberance. The polypeptide is Large ribosomal subunit protein uL18 (Rickettsia rickettsii (strain Iowa)).